The chain runs to 446 residues: Phosphoglucosamine mutase (446 aa).

The active-site Phosphoserine intermediate is serine 99. 4 residues coordinate Mg(2+): serine 99, aspartate 242, aspartate 244, and aspartate 246. Serine 99 carries the post-translational modification Phosphoserine.

This sequence belongs to the phosphohexose mutase family. It depends on Mg(2+) as a cofactor. In terms of processing, activated by phosphorylation.

It catalyses the reaction alpha-D-glucosamine 1-phosphate = D-glucosamine 6-phosphate. Catalyzes the conversion of glucosamine-6-phosphate to glucosamine-1-phosphate. The polypeptide is Phosphoglucosamine mutase (Campylobacter curvus (strain 525.92)).